The following is a 276-amino-acid chain: 4-hydroxy-tetrahydrodipicolinate reductase (276 aa).

16–21 (GALGKM) is a binding site for NAD(+). Lysine 44 serves as a coordination point for NADP(+). Residues 109-111 (GTT) and 135-138 (APNF) each bind NAD(+). Residue histidine 165 is the Proton donor/acceptor of the active site. Histidine 166 is a binding site for (S)-2,3,4,5-tetrahydrodipicolinate. Catalysis depends on lysine 169, which acts as the Proton donor. 175–176 (GT) is a binding site for (S)-2,3,4,5-tetrahydrodipicolinate.

This sequence belongs to the DapB family.

The protein localises to the cytoplasm. It catalyses the reaction (S)-2,3,4,5-tetrahydrodipicolinate + NAD(+) + H2O = (2S,4S)-4-hydroxy-2,3,4,5-tetrahydrodipicolinate + NADH + H(+). The catalysed reaction is (S)-2,3,4,5-tetrahydrodipicolinate + NADP(+) + H2O = (2S,4S)-4-hydroxy-2,3,4,5-tetrahydrodipicolinate + NADPH + H(+). It functions in the pathway amino-acid biosynthesis; L-lysine biosynthesis via DAP pathway; (S)-tetrahydrodipicolinate from L-aspartate: step 4/4. Catalyzes the conversion of 4-hydroxy-tetrahydrodipicolinate (HTPA) to tetrahydrodipicolinate. The chain is 4-hydroxy-tetrahydrodipicolinate reductase from Thermosynechococcus vestitus (strain NIES-2133 / IAM M-273 / BP-1).